The primary structure comprises 116 residues: MNAIAEMPSPILFSDSAAAKVAELIEDEGNPDLKLRVFVQGGGCSGFQYGFTFDEIVNEDDTTMTKNGVQLLIDSMSYQYLVGAEIDYKDDLEGAQFVIKNPNATTTCGCGSSFTA.

Residues cysteine 44, cysteine 108, and cysteine 110 each contribute to the iron-sulfur cluster site.

Belongs to the HesB/IscA family. Homodimer. The cofactor is iron-sulfur cluster.

Required for insertion of 4Fe-4S clusters. The chain is Putative iron-sulfur cluster insertion protein ErpA from Herminiimonas arsenicoxydans.